A 123-amino-acid chain; its full sequence is Large ribosomal subunit protein bL12 (123 aa).

The protein belongs to the bacterial ribosomal protein bL12 family. As to quaternary structure, homodimer. Part of the ribosomal stalk of the 50S ribosomal subunit. Forms a multimeric L10(L12)X complex, where L10 forms an elongated spine to which 2 to 4 L12 dimers bind in a sequential fashion. Binds GTP-bound translation factors.

Its function is as follows. Forms part of the ribosomal stalk which helps the ribosome interact with GTP-bound translation factors. Is thus essential for accurate translation. The sequence is that of Large ribosomal subunit protein bL12 from Maricaulis maris (strain MCS10) (Caulobacter maris).